A 413-amino-acid polypeptide reads, in one-letter code: BEN domain-containing protein 7 (413 aa).

Residues Lys-16, Lys-56, and Lys-85 each participate in a glycyl lysine isopeptide (Lys-Gly) (interchain with G-Cter in SUMO2) cross-link. Over residues 78 to 88 (GKEGEKLKEEP) the composition is skewed to basic and acidic residues. Disordered stretches follow at residues 78–153 (GKEG…GELP) and 208–243 (RTAV…MEKK). 2 stretches are compositionally biased toward polar residues: residues 99-111 (LNSS…SLHP) and 121-153 (PPQS…GELP). Over residues 211 to 222 (VSRKRNKKKKVP) the composition is skewed to basic residues. The span at 223 to 232 (PKTVEPLTVK) shows a compositional bias: low complexity. A Glycyl lysine isopeptide (Lys-Gly) (interchain with G-Cter in SUMO2) cross-link involves residue Lys-243. One can recognise a BEN domain in the interval 287-392 (GFDVFMPKSQ…IKLARRRLKR (106 aa)). Residue Thr-324 is modified to Phosphothreonine. Ser-328 is subject to Phosphoserine.

The protein is BEN domain-containing protein 7 (BEND7) of Homo sapiens (Human).